A 217-amino-acid chain; its full sequence is Photosynthetic NDH subunit of lumenal location 4, chloroplastic (217 aa).

A chloroplast-targeting transit peptide spans 1-34; it reads MAISTLTLTQSLYTRSFRPTIFFSSSSSSSFSCL. Intrachain disulfides connect Cys87–Cys99 and Cys188–Cys193. Residues 112 to 211 enclose the PPIase FKBP-type domain; the sequence is GVLVNIHYTA…LYDINFVEIY (100 aa).

It belongs to the FKBP-type PPIase family. In terms of assembly, part of the chloroplast NDH complex, composed of a mixture of chloroplast and nucleus encoded subunits. Component of the NDH lumenal subcomplex, at least composed of PnsL1, PnsL2, PnsL3, PnsL4 and PnsL5.

The protein resides in the plastid. The protein localises to the chloroplast thylakoid lumen. The catalysed reaction is [protein]-peptidylproline (omega=180) = [protein]-peptidylproline (omega=0). Its function is as follows. NDH shuttles electrons from NAD(P)H:plastoquinone, via FMN and iron-sulfur (Fe-S) centers, to quinones in the photosynthetic chain and possibly in a chloroplast respiratory chain. The immediate electron acceptor for the enzyme in this species is believed to be plastoquinone. Couples the redox reaction to proton translocation, and thus conserves the redox energy in a proton gradient. PPIases accelerate the folding of proteins. It catalyzes the cis-trans isomerization of proline imidic peptide bonds in oligopeptides. Seems to be essential for stabilizing the NDH subcomplex A. The sequence is that of Photosynthetic NDH subunit of lumenal location 4, chloroplastic from Arabidopsis thaliana (Mouse-ear cress).